A 936-amino-acid polypeptide reads, in one-letter code: Isoleucine--tRNA ligase (936 aa).

Positions 58 to 68 match the 'HIGH' region motif; it reads PYANGRAHLGT. Glutamate 561 lines the L-isoleucyl-5'-AMP pocket. A 'KMSKS' region motif is present at residues 602–606; the sequence is KMSKS. Residue lysine 605 coordinates ATP. Positions 899, 902, 919, and 922 each coordinate Zn(2+).

It belongs to the class-I aminoacyl-tRNA synthetase family. IleS type 1 subfamily. As to quaternary structure, monomer. The cofactor is Zn(2+).

It is found in the cytoplasm. It carries out the reaction tRNA(Ile) + L-isoleucine + ATP = L-isoleucyl-tRNA(Ile) + AMP + diphosphate. Catalyzes the attachment of isoleucine to tRNA(Ile). As IleRS can inadvertently accommodate and process structurally similar amino acids such as valine, to avoid such errors it has two additional distinct tRNA(Ile)-dependent editing activities. One activity is designated as 'pretransfer' editing and involves the hydrolysis of activated Val-AMP. The other activity is designated 'posttransfer' editing and involves deacylation of mischarged Val-tRNA(Ile). This Coxiella burnetii (strain CbuK_Q154) (Coxiella burnetii (strain Q154)) protein is Isoleucine--tRNA ligase.